We begin with the raw amino-acid sequence, 505 residues long: Probable RNA exonuclease NGL3 (505 aa).

Disordered regions lie at residues 1–75 (MDSQ…FPTP) and 334–369 (RNGE…SFTA). Residues 10–23 (SPSQKESSSTSGLV) are compositionally biased toward polar residues. The segment covering 36–54 (HRDQLSVDQIKKIREERAQ) has biased composition (basic and acidic residues). Residue Ser-62 is modified to Phosphoserine. Residues 338 to 347 (ESDQDDEECD) show a composition bias toward acidic residues.

Belongs to the CCR4/nocturin family.

The chain is Probable RNA exonuclease NGL3 (NGL3) from Saccharomyces cerevisiae (strain ATCC 204508 / S288c) (Baker's yeast).